Consider the following 158-residue polypeptide: Fibroblast growth factor 2 (158 aa).

Residues 1–12 constitute a propeptide that is removed on maturation; the sequence is MAAGAAGSITTL. Asparagine 39 contacts heparin. A heparin-binding region spans residues 131–147; sequence KRTGQYKPGPKTGPGQK.

The protein belongs to the heparin-binding growth factors family.

The protein resides in the secreted. Its subcellular location is the nucleus. Its function is as follows. Acts as a ligand for FGFR1, FGFR2, FGFR3 and FGFR4. Also acts as an integrin ligand which is required for FGF2 signaling. Plays an important role in the regulation of cell survival, cell division, cell differentiation and cell migration. Functions as a potent mitogen in vitro. Can induce angiogenesis. The protein is Fibroblast growth factor 2 (FGF2) of Gallus gallus (Chicken).